A 424-amino-acid polypeptide reads, in one-letter code: Dihydroorotase (424 aa).

Zn(2+)-binding residues include H60 and H62. Substrate is bound by residues 62-64 and N94; that span reads HFR. Zn(2+) is bound by residues D151, H178, and H231. N277 provides a ligand contact to substrate. D304 is a binding site for Zn(2+). The active site involves D304. H308 serves as a coordination point for substrate.

It belongs to the metallo-dependent hydrolases superfamily. DHOase family. Class I DHOase subfamily. Zn(2+) is required as a cofactor.

It carries out the reaction (S)-dihydroorotate + H2O = N-carbamoyl-L-aspartate + H(+). It functions in the pathway pyrimidine metabolism; UMP biosynthesis via de novo pathway; (S)-dihydroorotate from bicarbonate: step 3/3. Catalyzes the reversible cyclization of carbamoyl aspartate to dihydroorotate. The polypeptide is Dihydroorotase (Clostridium acetobutylicum (strain ATCC 824 / DSM 792 / JCM 1419 / IAM 19013 / LMG 5710 / NBRC 13948 / NRRL B-527 / VKM B-1787 / 2291 / W)).